The following is a 119-amino-acid chain: NADH-quinone oxidoreductase subunit A (119 aa).

The next 3 helical transmembrane spans lie at Y7–G27, L63–V83, and I88–A108.

The protein belongs to the complex I subunit 3 family. As to quaternary structure, NDH-1 is composed of 14 different subunits. Subunits NuoA, H, J, K, L, M, N constitute the membrane sector of the complex.

Its subcellular location is the cell inner membrane. The catalysed reaction is a quinone + NADH + 5 H(+)(in) = a quinol + NAD(+) + 4 H(+)(out). NDH-1 shuttles electrons from NADH, via FMN and iron-sulfur (Fe-S) centers, to quinones in the respiratory chain. The immediate electron acceptor for the enzyme in this species is believed to be ubiquinone. Couples the redox reaction to proton translocation (for every two electrons transferred, four hydrogen ions are translocated across the cytoplasmic membrane), and thus conserves the redox energy in a proton gradient. The polypeptide is NADH-quinone oxidoreductase subunit A (Burkholderia ambifaria (strain MC40-6)).